The following is a 185-amino-acid chain: Probable RNA 2'-phosphotransferase (185 aa).

It belongs to the KptA/TPT1 family.

In terms of biological role, removes the 2'-phosphate from RNA via an intermediate in which the phosphate is ADP-ribosylated by NAD followed by a presumed transesterification to release the RNA and generate ADP-ribose 1''-2''-cyclic phosphate (APPR&gt;P). May function as an ADP-ribosylase. This is Probable RNA 2'-phosphotransferase from Rhizobium rhizogenes (strain K84 / ATCC BAA-868) (Agrobacterium radiobacter).